The primary structure comprises 431 residues: Eukaryotic translation initiation factor 5 (431 aa).

The residue at position 10 (serine 10) is a Phosphoserine. 27–34 serves as a coordination point for GTP; sequence GKGNGIKT. The disordered stretch occupies residues 143 to 216; the sequence is KNPPENSDSG…TTEEAQRRRM (74 aa). Basic and acidic residues predominate over residues 153–170; sequence TGKKEKEKKNRKGKDKEN. Pro residues predominate over residues 178 to 193; that stretch reads TPPPPPPPNEISPPPH. The segment covering 196 to 209 has biased composition (acidic residues); it reads EEEEDDDWGEDTTE. Position 227 is a phosphothreonine (threonine 227). Phosphoserine is present on residues serine 229, serine 389, serine 390, and serine 410. A W2 domain is found at 233-392; the sequence is ERTIEERVNI…KEAEEESSGG (160 aa). Residues lysine 413 and lysine 418 each participate in a glycyl lysine isopeptide (Lys-Gly) (interchain with G-Cter in SUMO2) cross-link. Serine 419 bears the Phosphoserine mark.

It belongs to the eIF-2-beta/eIF-5 family. In terms of assembly, component of the 43S pre-initiation complex (43S PIC), which is composed of the 40S ribosomal subunit, EIF1, eIF1A (EIF1AX), eIF3 complex, EIF5 and eIF2-GTP-initiator tRNA complex (eIF2 ternary complex). Interacts with eIF1A (EIF1AX) during scanning. Interacts through its C-terminal domain (CTD) with EIF1 or with eIF2-beta (EIF2S2) (mutually exclusive) through a common binding site. Interacts through its C-terminal domain (CTD) with the CTD of EIF5B. Interacts with FMR1 isoform 6; this interaction occurs in a RNA-dependent manner.

The protein localises to the cytoplasm. Functionally, component of the 43S pre-initiation complex (43S PIC), which binds to the mRNA cap-proximal region, scans mRNA 5'-untranslated region, and locates the initiation codon. In this complex, acts as a GTPase-activating protein, by promoting GTP hydrolysis by eIF2G (EIF2S3). During scanning, interacts with both EIF1 (via its C-terminal domain (CTD)) and EIF1A (via its NTD). This interaction with EIF1A contributes to the maintenance of EIF1 within the open 43S PIC. When start codon is recognized, EIF5, via its NTD, induces eIF2G (EIF2S3) to hydrolyze the GTP. Start codon recognition also induces a conformational change of the PIC to a closed state. This change increases the affinity of EIF5-CTD for EIF2-beta (EIF2S2), which allows the release, by an indirect mechanism, of EIF1 from the PIC. Finally, EIF5 stabilizes the PIC in its closed conformation. In Pongo abelii (Sumatran orangutan), this protein is Eukaryotic translation initiation factor 5 (EIF5).